The sequence spans 510 residues: ATP synthase subunit alpha (510 aa).

169–176 (GDRQTGKT) serves as a coordination point for ATP.

This sequence belongs to the ATPase alpha/beta chains family. F-type ATPases have 2 components, CF(1) - the catalytic core - and CF(0) - the membrane proton channel. CF(1) has five subunits: alpha(3), beta(3), gamma(1), delta(1), epsilon(1). CF(0) has four main subunits: a(1), b(1), b'(1) and c(9-12).

It is found in the cell inner membrane. It carries out the reaction ATP + H2O + 4 H(+)(in) = ADP + phosphate + 5 H(+)(out). Its function is as follows. Produces ATP from ADP in the presence of a proton gradient across the membrane. The alpha chain is a regulatory subunit. In Rhodopseudomonas palustris (strain ATCC BAA-98 / CGA009), this protein is ATP synthase subunit alpha.